The following is a 128-amino-acid chain: Azurin (128 aa).

The 128-residue stretch at 1-128 (AECKVTVDST…SMMKGTVTVK (128 aa)) folds into the Plastocyanin-like domain. Cys3 and Cys26 are oxidised to a cystine. Residues His46, Cys112, His117, and Met121 each contribute to the Cu cation site.

It localises to the periplasm. Its function is as follows. Transfers electrons from cytochrome c551 to cytochrome oxidase. The protein is Azurin of Pseudomonas fluorescens biotype A.